A 291-amino-acid chain; its full sequence is N-acetylmannosamine kinase (291 aa).

ATP contacts are provided by residues 5-12 (AIDIGGTK) and 132-139 (GVGGGVVC). Zn(2+)-binding residues include His156, Cys166, Cys168, and Cys173.

It belongs to the ROK (NagC/XylR) family. NanK subfamily. As to quaternary structure, homodimer.

The catalysed reaction is an N-acyl-D-mannosamine + ATP = an N-acyl-D-mannosamine 6-phosphate + ADP + H(+). It functions in the pathway amino-sugar metabolism; N-acetylneuraminate degradation; D-fructose 6-phosphate from N-acetylneuraminate: step 2/5. In terms of biological role, catalyzes the phosphorylation of N-acetylmannosamine (ManNAc) to ManNAc-6-P. The protein is N-acetylmannosamine kinase of Salmonella paratyphi B (strain ATCC BAA-1250 / SPB7).